Reading from the N-terminus, the 906-residue chain is Protein translocase subunit SecA (906 aa).

ATP contacts are provided by residues Q87, 105–109, and D512; that span reads GEGKT. The interval 839 to 896 is disordered; that stretch reads LEEQQRQQSEAAPRTYTHATAESQLADEEAAGEEGHTTFVRDEQKIGRNDPCPCGSGK. The span at 871–886 shows a compositional bias: basic and acidic residues; that stretch reads EEGHTTFVRDEQKIGR. Residues C890, C892, C901, and H902 each coordinate Zn(2+).

The protein belongs to the SecA family. Monomer and homodimer. Part of the essential Sec protein translocation apparatus which comprises SecA, SecYEG and auxiliary proteins SecDF-YajC and YidC. The cofactor is Zn(2+).

Its subcellular location is the cell inner membrane. It localises to the cytoplasm. The enzyme catalyses ATP + H2O + cellular proteinSide 1 = ADP + phosphate + cellular proteinSide 2.. In terms of biological role, part of the Sec protein translocase complex. Interacts with the SecYEG preprotein conducting channel. Has a central role in coupling the hydrolysis of ATP to the transfer of proteins into and across the cell membrane, serving both as a receptor for the preprotein-SecB complex and as an ATP-driven molecular motor driving the stepwise translocation of polypeptide chains across the membrane. The polypeptide is Protein translocase subunit SecA (Aeromonas salmonicida (strain A449)).